The following is a 187-amino-acid chain: Orotate phosphoribosyltransferase (187 aa).

5-phospho-alpha-D-ribose 1-diphosphate-binding positions include Arg-99, Lys-100, Lys-103, His-105, and 125–133 (DDVITTGGS). The orotate site is built by Thr-129 and Arg-157.

The protein belongs to the purine/pyrimidine phosphoribosyltransferase family. PyrE subfamily. In terms of assembly, homodimer. Requires Mg(2+) as cofactor.

The catalysed reaction is orotidine 5'-phosphate + diphosphate = orotate + 5-phospho-alpha-D-ribose 1-diphosphate. It participates in pyrimidine metabolism; UMP biosynthesis via de novo pathway; UMP from orotate: step 1/2. Functionally, catalyzes the transfer of a ribosyl phosphate group from 5-phosphoribose 1-diphosphate to orotate, leading to the formation of orotidine monophosphate (OMP). This Leptospira borgpetersenii serovar Hardjo-bovis (strain L550) protein is Orotate phosphoribosyltransferase.